The sequence spans 580 residues: M-phase inducer phosphatase 2 (580 aa).

Residues 1 to 24 (MEVPQPEPAPGSALSPAGVCGGAQ) form a disordered region. Position 42 is a phosphoserine (Ser42). Residues 89–107 (SLSRRASESSLSSESSESS) are compositionally biased toward low complexity. Disordered stretches follow at residues 89 to 117 (SLSR…DSPS) and 165 to 196 (NITN…ENDG). Ser169 bears the Phosphoserine; by MELK mark. Ser249 is subject to Phosphoserine. Ser323 is subject to Phosphoserine; by MELK and MAPK14. The disordered stretch occupies residues 331 to 370 (PILKRLERPQDRDTPVQNKRRRSVTPPEEQQEAEEPKARV). A compositionally biased stretch (basic and acidic residues) spans 334–344 (KRLERPQDRDT). At Ser353 the chain carries Phosphoserine; by AURKA. Residue Ser375 is modified to Phosphoserine; by BRSK1 and MAPK14. In terms of domain architecture, Rhodanese spans 431 to 538 (IVDKFVIVDC…FFPQHPNFCE (108 aa)). Ser470 carries the phosphoserine modification. The active site involves Cys487. Ser563 is subject to Phosphoserine.

The protein belongs to the MPI phosphatase family. As to quaternary structure, interacts with MAPK14 and 14-3-3 proteins. Post-translationally, phosphorylated by BRSK1 in vitro. Phosphorylated by CHEK1, which inhibits the activity of this protein. Phosphorylation at Ser-353 by AURKA might locally participate in the control of the onset of mitosis. Phosphorylation by MELK at Ser-169 promotes localization to the centrosome and the spindle poles during mitosis. Phosphorylation at Ser-323 and Ser-375 by MAPK14 is required for binding to 14-3-3 proteins.

The protein localises to the cytoplasm. Its subcellular location is the cytoskeleton. It is found in the microtubule organizing center. The protein resides in the centrosome. It localises to the spindle pole. The enzyme catalyses O-phospho-L-tyrosyl-[protein] + H2O = L-tyrosyl-[protein] + phosphate. Stimulated by B-type cyclins. Tyrosine protein phosphatase which functions as a dosage-dependent inducer of mitotic progression. Directly dephosphorylates CDK1 and stimulates its kinase activity. Required for G2/M phases of the cell cycle progression and abscission during cytokinesis in a ECT2-dependent manner. The three isoforms seem to have a different level of activity. This Homo sapiens (Human) protein is M-phase inducer phosphatase 2 (CDC25B).